The chain runs to 157 residues: Small ribosomal subunit protein uS7 (157 aa).

The protein belongs to the universal ribosomal protein uS7 family. In terms of assembly, part of the 30S ribosomal subunit. Contacts proteins S9 and S11.

One of the primary rRNA binding proteins, it binds directly to 16S rRNA where it nucleates assembly of the head domain of the 30S subunit. Is located at the subunit interface close to the decoding center, probably blocks exit of the E-site tRNA. The chain is Small ribosomal subunit protein uS7 from Salinibacter ruber (strain DSM 13855 / M31).